The sequence spans 109 residues: Glutaredoxin-C13 (109 aa).

In terms of domain architecture, Glutaredoxin spans Ala2–Trp108. Residues Cys22 and Cys25 are joined by a disulfide bond. A Responsive for interaction with TGA factors motif is present at residues Ala106 to Leu109.

This sequence belongs to the glutaredoxin family. CC-type subfamily.

The protein localises to the cytoplasm. Its subcellular location is the nucleus. Has a glutathione-disulfide oxidoreductase activity in the presence of NADPH and glutathione reductase. Reduces low molecular weight disulfides and proteins. The chain is Glutaredoxin-C13 (GRXC13) from Oryza sativa subsp. japonica (Rice).